Reading from the N-terminus, the 434-residue chain is Eukaryotic translation initiation factor 3 subunit E (434 aa).

Residues 219 to 392 (FFNHPKGRDL…GHVVMGTQPL (174 aa)) enclose the PCI domain.

The protein belongs to the eIF-3 subunit E family. As to quaternary structure, component of the eukaryotic translation initiation factor 3 (eIF-3) complex. The eIF-3 complex interacts with pix. Interacts with mxt.

The protein localises to the cytoplasm. Its function is as follows. Component of the eukaryotic translation initiation factor 3 (eIF-3) complex, which is involved in protein synthesis of a specialized repertoire of mRNAs and, together with other initiation factors, stimulates binding of mRNA and methionyl-tRNAi to the 40S ribosome. The eIF-3 complex specifically targets and initiates translation of a subset of mRNAs involved in cell proliferation. In Drosophila virilis (Fruit fly), this protein is Eukaryotic translation initiation factor 3 subunit E (eIF3-S6).